Here is a 401-residue protein sequence, read N- to C-terminus: tRNA pseudouridine synthase Pus10 (401 aa).

The region spanning 64–195 (ALAKSGHRES…DGSVSVEVMP (132 aa)) is the THUMP domain.

The protein belongs to the pseudouridine synthase Pus10 family.

It catalyses the reaction uridine(54) in tRNA = pseudouridine(54) in tRNA. It carries out the reaction uridine(55) in tRNA = pseudouridine(55) in tRNA. Responsible for synthesis of pseudouridine from uracil-54 and uracil-55 in the psi GC loop of transfer RNAs. The chain is tRNA pseudouridine synthase Pus10 from Caldivirga maquilingensis (strain ATCC 700844 / DSM 13496 / JCM 10307 / IC-167).